A 458-amino-acid chain; its full sequence is Purple acid phosphatase 23 (458 aa).

The first 19 residues, 1–19 (MTLLIMITLTSISLLLAAA), serve as a signal peptide directing secretion. Asn59, Asn121, and Asn136 each carry an N-linked (GlcNAc...) asparagine glycan. Residue Asp194 participates in Fe cation binding. A glycan (N-linked (GlcNAc...) asparagine) is linked at Asn200. 2 residues coordinate Fe cation: Asp221 and Tyr224. Asp221 contacts Mn(2+). Asn278 contacts Mn(2+). Residue Asn278 coordinates substrate. The N-linked (GlcNAc...) asparagine glycan is linked to Asn331. His360 lines the Mn(2+) pocket. The Proton donor role is filled by His370. A Mn(2+)-binding site is contributed by His397. 397 to 399 (HVH) is a substrate binding site. His399 serves as a coordination point for Fe cation. N-linked (GlcNAc...) asparagine glycans are attached at residues Asn409 and Asn455.

It belongs to the metallophosphoesterase superfamily. Purple acid phosphatase family. In terms of assembly, homodimer. Fe cation is required as a cofactor. It depends on Mn(2+) as a cofactor. Specifically expressed in flowers.

The protein localises to the secreted. It carries out the reaction a phosphate monoester + H2O = an alcohol + phosphate. Functionally, acid phosphatase activity with ATP, ADP, dATP, pyrophosphate, polyphosphate, phosphoserine and phosphothreonine. Low or no activity with phosphotyrosine, AMP and phytate. The polypeptide is Purple acid phosphatase 23 (PAP23) (Arabidopsis thaliana (Mouse-ear cress)).